A 104-amino-acid chain; its full sequence is Phosphoribosyl-ATP pyrophosphatase (104 aa).

The protein belongs to the PRA-PH family.

The protein resides in the cytoplasm. The catalysed reaction is 1-(5-phospho-beta-D-ribosyl)-ATP + H2O = 1-(5-phospho-beta-D-ribosyl)-5'-AMP + diphosphate + H(+). The protein operates within amino-acid biosynthesis; L-histidine biosynthesis; L-histidine from 5-phospho-alpha-D-ribose 1-diphosphate: step 2/9. This chain is Phosphoribosyl-ATP pyrophosphatase, found in Streptococcus gordonii (strain Challis / ATCC 35105 / BCRC 15272 / CH1 / DL1 / V288).